Here is a 146-residue protein sequence, read N- to C-terminus: Histone H2A.1 (146 aa).

Met1 carries the N-acetylmethionine modification. Positions 1–24 are disordered; that stretch reads MDATKTTKGAGGRKGGPRKKSVTK. Residues 142–145 carry the SPKK motif motif; the sequence is SPKK.

Belongs to the histone H2A family. In terms of assembly, the nucleosome is a histone octamer containing two molecules each of H2A, H2B, H3 and H4 assembled in one H3-H4 heterotetramer and two H2A-H2B heterodimers. The octamer wraps approximately 147 bp of DNA. In terms of tissue distribution, high expression in meristematic tissues, in cells of the root pericycle and in shoot cortical cells undergoing endoduplication of their DNA.

Its subcellular location is the nucleus. The protein localises to the chromosome. Core component of nucleosome. Nucleosomes wrap and compact DNA into chromatin, limiting DNA accessibility to the cellular machineries which require DNA as a template. Histones thereby play a central role in transcription regulation, DNA repair, DNA replication and chromosomal stability. DNA accessibility is regulated via a complex set of post-translational modifications of histones, also called histone code, and nucleosome remodeling. This Solanum lycopersicum (Tomato) protein is Histone H2A.1.